Here is an 88-residue protein sequence, read N- to C-terminus: Cell division topological specificity factor (88 aa).

It belongs to the MinE family.

Functionally, prevents the cell division inhibition by proteins MinC and MinD at internal division sites while permitting inhibition at polar sites. This ensures cell division at the proper site by restricting the formation of a division septum at the midpoint of the long axis of the cell. This Herminiimonas arsenicoxydans protein is Cell division topological specificity factor.